A 153-amino-acid chain; its full sequence is Transcriptional repressor NrdR (153 aa).

A zinc finger lies at 3–34 (CPSCHHSGTRVLESRPVEEGRSIRRRRECEQC). The ATP-cone domain maps to 49–139 (LIVVKKEGTR…VYRQFKDINV (91 aa)).

It belongs to the NrdR family. Zn(2+) is required as a cofactor.

In terms of biological role, negatively regulates transcription of bacterial ribonucleotide reductase nrd genes and operons by binding to NrdR-boxes. This chain is Transcriptional repressor NrdR, found in Geobacillus kaustophilus (strain HTA426).